We begin with the raw amino-acid sequence, 68 residues long: ATP synthase subunit c (68 aa).

A run of 2 helical transmembrane segments spans residues 4–24 (IAAA…NGLI) and 45–65 (IMFI…VIAF).

It belongs to the ATPase C chain family. As to quaternary structure, F-type ATPases have 2 components, F(1) - the catalytic core - and F(0) - the membrane proton channel. F(1) has five subunits: alpha(3), beta(3), gamma(1), delta(1), epsilon(1). F(0) has three main subunits: a(1), b(2) and c(10-14). The alpha and beta chains form an alternating ring which encloses part of the gamma chain. F(1) is attached to F(0) by a central stalk formed by the gamma and epsilon chains, while a peripheral stalk is formed by the delta and b chains.

It localises to the cell membrane. Functionally, f(1)F(0) ATP synthase produces ATP from ADP in the presence of a proton or sodium gradient. F-type ATPases consist of two structural domains, F(1) containing the extramembraneous catalytic core and F(0) containing the membrane proton channel, linked together by a central stalk and a peripheral stalk. During catalysis, ATP synthesis in the catalytic domain of F(1) is coupled via a rotary mechanism of the central stalk subunits to proton translocation. Its function is as follows. Key component of the F(0) channel; it plays a direct role in translocation across the membrane. A homomeric c-ring of between 10-14 subunits forms the central stalk rotor element with the F(1) delta and epsilon subunits. This is ATP synthase subunit c from Staphylococcus saprophyticus subsp. saprophyticus (strain ATCC 15305 / DSM 20229 / NCIMB 8711 / NCTC 7292 / S-41).